Here is a 274-residue protein sequence, read N- to C-terminus: tRNA pseudouridine synthase A (274 aa).

The active-site Nucleophile is the Asp-57. Residue Tyr-115 coordinates substrate.

It belongs to the tRNA pseudouridine synthase TruA family. Homodimer.

The catalysed reaction is uridine(38/39/40) in tRNA = pseudouridine(38/39/40) in tRNA. Functionally, formation of pseudouridine at positions 38, 39 and 40 in the anticodon stem and loop of transfer RNAs. This Frankia casuarinae (strain DSM 45818 / CECT 9043 / HFP020203 / CcI3) protein is tRNA pseudouridine synthase A.